Consider the following 256-residue polypeptide: Post-translational flagellin modification protein A (256 aa).

Residue Ser145 participates in substrate binding. Tyr168 (proton acceptor) is an active-site residue.

Belongs to the short-chain dehydrogenases/reductases (SDR) family.

Functionally, required for biosynthesis of LAH modification in the post-translational modification of Campylobacter coli flagellin. This chain is Post-translational flagellin modification protein A (ptmA), found in Campylobacter coli.